The chain runs to 943 residues: Translation initiation factor IF-2 (943 aa).

Disordered regions lie at residues 96 to 229 (FIKR…ERRR) and 243 to 352 (AAPK…QRQQ). The span at 104–116 (DAPSDAAESAPSA) shows a compositional bias: low complexity. 2 stretches are compositionally biased toward basic and acidic residues: residues 120–163 (ELVR…EERA) and 171–229 (AEKK…ERRR). Positions 278–293 (ATGSGTGARAAAPSAP) are enriched in low complexity. A compositionally biased stretch (basic and acidic residues) spans 313–323 (TTKKKEIKTRG). One can recognise a tr-type G domain in the interval 443–612 (SRAPVVTVMG…LLQAEVLELK (170 aa)). A G1 region spans residues 452-459 (GHVDHGKT). Position 452 to 459 (452 to 459 (GHVDHGKT)) interacts with GTP. Positions 477 to 481 (GITQH) are G2. Residues 498–501 (DTPG) are G3. GTP contacts are provided by residues 498-502 (DTPGH) and 552-555 (TKAD). The G4 stretch occupies residues 552-555 (TKAD). A G5 region spans residues 588–590 (SSK).

This sequence belongs to the TRAFAC class translation factor GTPase superfamily. Classic translation factor GTPase family. IF-2 subfamily.

Its subcellular location is the cytoplasm. One of the essential components for the initiation of protein synthesis. Protects formylmethionyl-tRNA from spontaneous hydrolysis and promotes its binding to the 30S ribosomal subunits. Also involved in the hydrolysis of GTP during the formation of the 70S ribosomal complex. The polypeptide is Translation initiation factor IF-2 (Acidovorax sp. (strain JS42)).